The sequence spans 556 residues: Formate--tetrahydrofolate ligase (556 aa).

65-72 (TPAGEGKT) provides a ligand contact to ATP.

It belongs to the formate--tetrahydrofolate ligase family.

The enzyme catalyses (6S)-5,6,7,8-tetrahydrofolate + formate + ATP = (6R)-10-formyltetrahydrofolate + ADP + phosphate. It participates in one-carbon metabolism; tetrahydrofolate interconversion. The sequence is that of Formate--tetrahydrofolate ligase from Symbiobacterium thermophilum (strain DSM 24528 / JCM 14929 / IAM 14863 / T).